A 584-amino-acid chain; its full sequence is Chondroitin proteoglycan 1 (584 aa).

An N-terminal signal peptide occupies residues 1–17 (MTLKPVLLAFLVASAYA). O-linked (Xyl...) (chondroitin sulfate) serine glycosylation is present at Ser50. 3 Chitin-binding type-2 domains span residues 58 to 115 (DTDC…QCGG), 211 to 268 (TKSC…ECTN), and 524 to 578 (VPAC…ECHQ). 2 disulfides stabilise this stretch: Cys91/Cys104 and Cys244/Cys257. The segment at 267 to 295 (TNGSGNDEGSADETTPESSGEMPYSNGYG) is disordered. A glycan (N-linked (GlcNAc...) asparagine) is linked at Asn268. Cys554 and Cys567 are oxidised to a cystine.

In terms of tissue distribution, expressed in the germline.

Required for polar body extrusion during cytokinesis in embryo development. Affects cortical granule size. Has roles in meiotic chromosome segregation, osmotic barrier function and polarization in conjunction with cpg-2. Binds chitin. The chain is Chondroitin proteoglycan 1 (cpg-1) from Caenorhabditis elegans.